Reading from the N-terminus, the 260-residue chain is NH(3)-dependent NAD(+) synthetase (260 aa).

Residue 31–38 (GLSGGLDS) participates in ATP binding. Asp37 serves as a coordination point for Mg(2+). Arg112 serves as a coordination point for deamido-NAD(+). Position 132 (Thr132) interacts with ATP. Glu137 is a binding site for Mg(2+). 2 residues coordinate ATP: Lys161 and Ser183.

It belongs to the NAD synthetase family. As to quaternary structure, homodimer.

The catalysed reaction is deamido-NAD(+) + NH4(+) + ATP = AMP + diphosphate + NAD(+) + H(+). It participates in cofactor biosynthesis; NAD(+) biosynthesis; NAD(+) from deamido-NAD(+) (ammonia route): step 1/1. Functionally, catalyzes the ATP-dependent amidation of deamido-NAD to form NAD. Uses ammonia as a nitrogen source. The sequence is that of NH(3)-dependent NAD(+) synthetase from Helicobacter pylori (strain G27).